A 320-amino-acid polypeptide reads, in one-letter code: Aspartate carbamoyltransferase catalytic subunit (320 aa).

Carbamoyl phosphate contacts are provided by arginine 70 and threonine 71. Lysine 98 serves as a coordination point for L-aspartate. Carbamoyl phosphate is bound by residues arginine 120, histidine 149, and glutamine 152. L-aspartate is bound by residues arginine 182 and arginine 237. 2 residues coordinate carbamoyl phosphate: glycine 278 and proline 279.

Belongs to the aspartate/ornithine carbamoyltransferase superfamily. ATCase family. Heterododecamer (2C3:3R2) of six catalytic PyrB chains organized as two trimers (C3), and six regulatory PyrI chains organized as three dimers (R2).

It carries out the reaction carbamoyl phosphate + L-aspartate = N-carbamoyl-L-aspartate + phosphate + H(+). The protein operates within pyrimidine metabolism; UMP biosynthesis via de novo pathway; (S)-dihydroorotate from bicarbonate: step 2/3. Catalyzes the condensation of carbamoyl phosphate and aspartate to form carbamoyl aspartate and inorganic phosphate, the committed step in the de novo pyrimidine nucleotide biosynthesis pathway. The polypeptide is Aspartate carbamoyltransferase catalytic subunit (Ruthia magnifica subsp. Calyptogena magnifica).